The following is a 488-amino-acid chain: 3-octaprenyl-4-hydroxybenzoate carboxy-lyase (488 aa).

Asparagine 172 contacts Mn(2+). Prenylated FMN is bound by residues 175–177 (IYR), 189–191 (RWL), and 194–195 (RG). Position 238 (glutamate 238) interacts with Mn(2+). Aspartate 287 functions as the Proton donor in the catalytic mechanism.

It belongs to the UbiD family. Homohexamer. Requires prenylated FMN as cofactor. It depends on Mn(2+) as a cofactor.

The protein resides in the cell membrane. It carries out the reaction a 4-hydroxy-3-(all-trans-polyprenyl)benzoate + H(+) = a 2-(all-trans-polyprenyl)phenol + CO2. It participates in cofactor biosynthesis; ubiquinone biosynthesis. Its function is as follows. Catalyzes the decarboxylation of 3-octaprenyl-4-hydroxy benzoate to 2-octaprenylphenol, an intermediate step in ubiquinone biosynthesis. This chain is 3-octaprenyl-4-hydroxybenzoate carboxy-lyase, found in Stutzerimonas stutzeri (strain A1501) (Pseudomonas stutzeri).